We begin with the raw amino-acid sequence, 303 residues long: GTPase Era (303 aa).

In terms of domain architecture, Era-type G spans 7–174; the sequence is KSGFVAILGR…IDTLSEKLDE (168 aa). The G1 stretch occupies residues 15–22; the sequence is GRPNVGKS. Residue 15 to 22 coordinates GTP; it reads GRPNVGKS. The segment at 41-45 is G2; it reads QTTRN. Residues 62-65 are G3; it reads DTPG. Residues 62-66 and 124-127 each bind GTP; these read DTPGI and NKID. The tract at residues 124-127 is G4; the sequence is NKID. The G5 stretch occupies residues 153-155; sequence ISA. The KH type-2 domain occupies 205–283; sequence TREEVPHSIA…YLETWVKIKN (79 aa).

It belongs to the TRAFAC class TrmE-Era-EngA-EngB-Septin-like GTPase superfamily. Era GTPase family. As to quaternary structure, monomer.

It localises to the cytoplasm. It is found in the cell membrane. Functionally, an essential GTPase that binds both GDP and GTP, with rapid nucleotide exchange. Plays a role in 16S rRNA processing and 30S ribosomal subunit biogenesis and possibly also in cell cycle regulation and energy metabolism. This is GTPase Era from Lactococcus lactis subsp. lactis (strain IL1403) (Streptococcus lactis).